Reading from the N-terminus, the 574-residue chain is DNA-directed primase/polymerase protein (574 aa).

Residues 2–22 are a coiled coil; sequence KRKWEERVKKVEELASYYERN. Residues R76, 116-118, 167-171, 291-294, and K300 each bind substrate; these read DLE, KFSRH, and RNFR. Mn(2+)-binding residues include D116 and E118. Zn(2+) is bound by residues C424, H431, C451, and C456. A Zinc knuckle motif motif is present at residues 424–457; sequence CENIGRAHRSNNIMILVDLKKEVWYQKCHDPVCR.

Belongs to the eukaryotic-type primase small subunit family. It depends on Mn(2+) as a cofactor.

Its subcellular location is the nucleus. The protein resides in the mitochondrion matrix. It localises to the chromosome. It catalyses the reaction ssDNA + n NTP = ssDNA/pppN(pN)n-1 hybrid + (n-1) diphosphate.. The enzyme catalyses DNA(n) + a 2'-deoxyribonucleoside 5'-triphosphate = DNA(n+1) + diphosphate. In terms of biological role, DNA primase and DNA polymerase required to tolerate replication-stalling lesions by bypassing them. Required to facilitate mitochondrial and nuclear replication fork progression by initiating de novo DNA synthesis using dNTPs and acting as an error-prone DNA polymerase able to bypass certain DNA lesions. Shows a high capacity to tolerate DNA damage lesions such as 8oxoG and abasic sites in DNA. Provides different translesion synthesis alternatives when DNA replication is stalled: able to synthesize DNA primers downstream of lesions, such as UV lesions, R-loops and G-quadruplexes, to allow DNA replication to continue. Can also realign primers ahead of 'unreadable lesions' such as abasic sites and 6-4 photoproduct (6-4 pyrimidine-pyrimidinone), thereby skipping the lesion. Repriming avoids fork degradation while leading to accumulation of internal ssDNA gaps behind the forks. Also able to incorporate nucleotides opposite DNA lesions such as 8oxoG, like a regular translesion synthesis DNA polymerase. Also required for reinitiating stalled forks after ultraviolet (UV) damage during nuclear DNA replication. Required for mitochondrial DNA (mtDNA) synthesis and replication, by reinitiating synthesis after UV damage or in the presence of chain-terminating nucleotides. In addition to its role in DNA damage response, also required to maintain efficient nuclear and mitochondrial DNA replication in unperturbed cells. The polypeptide is DNA-directed primase/polymerase protein (Gallus gallus (Chicken)).